The primary structure comprises 406 residues: RILP-like protein 1 (406 aa).

Positions Gln5–Glu99 constitute an RH1 domain. Positions Asp105–Ala319 form a coiled coil. Disordered stretches follow at residues Glu234–Glu272 and Ser323–Pro351. The span at Glu241–Glu257 shows a compositional bias: basic and acidic residues. An RH2 domain is found at Arg289–Leu358. Residues Thr340–Pro351 show a composition bias toward polar residues.

Belongs to the RILPL family.

It localises to the cytoplasm. The protein localises to the cytosol. Its subcellular location is the cytoskeleton. It is found in the microtubule organizing center. The protein resides in the centrosome. It localises to the cell projection. The protein localises to the cilium. Its function is as follows. Plays a role in the regulation of cell shape and polarity. Plays a role in cellular protein transport, including protein transport away from primary cilia. Neuroprotective protein. This Danio rerio (Zebrafish) protein is RILP-like protein 1 (rilpl1).